Here is a 216-residue protein sequence, read N- to C-terminus: Sporozoite antigen (216 aa).

The disordered stretch occupies residues 194-216 (QQQQPSSYGAPPASSQQPSGFFW).

In Eimeria tenella (Coccidian parasite), this protein is Sporozoite antigen.